The chain runs to 882 residues: DNA mismatch repair protein MutS (882 aa).

Position 627-634 (627-634 (GPNMAGKS)) interacts with ATP.

It belongs to the DNA mismatch repair MutS family.

Functionally, this protein is involved in the repair of mismatches in DNA. It is possible that it carries out the mismatch recognition step. This protein has a weak ATPase activity. This chain is DNA mismatch repair protein MutS, found in Anaeromyxobacter dehalogenans (strain 2CP-C).